The following is a 742-amino-acid chain: MTTIKTSNLGFPRLGRKREWKKAIESYWAKKISKEELDQTLTDLHKENLLLQKYYHLDSIPVGDFSLYDHILDTSLLFNIIPERFQGRTIDDDLLFDIARGNKDHVASALIKWFNTNYHYIVPEWDNVEPKVSRNVLLDRFKYAQSLNVNAHPVIVGPITFVKLSKGGHQTFEEKVKTLLPLYKEVFESLIDAGAEYIQVDEPILVTDDSESYENITREAYDYFEKAGVAKKLVIQTYFERAHLKFLSSLPVGGIGLDFVHDNGYNLKQIEAGDFDKSKTLYAGIIDGRNVWASDIEAKKVLIDKLLAHTNELVIQPSSSLLHVPVSLDDETLDTSVGEGLSFATEKLDELDALRRLFNQNDSVKYDKLKARYERFQNQSFKNLDYDFESVRTSRQSPFAQRIEQQQKRLNLPDLPTTTIGSFPQSREVRKYRADWKNKRITDEAYETFLKNEIARWIKIQEDIGLDVLVHGEFERNDMVEFFGEKLQGFLVTKFGWVQSYGSRAVKPPIIYGDVKWTAPLTVDETVYAQSLTDKPVKGMLTGPVTILNWSFERVDLPRKVVQDQIALAINEEVLALEAAGIKVIQVDEPALREGLPLRSEYHEQYLKDAVLSFKLATSSVRDETQIHTHMCYSQFGQIIHAIHDLDADVISIETSRSHGDLIKDFEDINYDLGIGLGVYDIHSPRIPTKEEITTAINRSLQQIDRSLFWVNPDCGLKTRKEEEVKDALTVLVNAVKAKRQE.

Residues 18–21 and lysine 112 each bind 5-methyltetrahydropteroyltri-L-glutamate; that span reads REWK. Residues 420 to 422 and glutamate 473 each bind L-homocysteine; that span reads IGS. L-methionine-binding positions include 420 to 422 and glutamate 473; that span reads IGS. A 5-methyltetrahydropteroyltri-L-glutamate-binding site is contributed by tryptophan 550. Position 588 (aspartate 588) interacts with L-homocysteine. Position 588 (aspartate 588) interacts with L-methionine. A 5-methyltetrahydropteroyltri-L-glutamate-binding site is contributed by glutamate 594. Zn(2+) is bound by residues histidine 630, cysteine 632, and glutamate 654. The active-site Proton donor is the histidine 683. A Zn(2+)-binding site is contributed by cysteine 715.

Belongs to the vitamin-B12 independent methionine synthase family. The cofactor is Zn(2+).

The enzyme catalyses 5-methyltetrahydropteroyltri-L-glutamate + L-homocysteine = tetrahydropteroyltri-L-glutamate + L-methionine. Its pathway is amino-acid biosynthesis; L-methionine biosynthesis via de novo pathway; L-methionine from L-homocysteine (MetE route): step 1/1. Functionally, catalyzes the transfer of a methyl group from 5-methyltetrahydrofolate to homocysteine resulting in methionine formation. The sequence is that of 5-methyltetrahydropteroyltriglutamate--homocysteine methyltransferase from Staphylococcus aureus (strain USA300).